The chain runs to 1821 residues: Latent-transforming growth factor beta-binding protein 2 (1821 aa).

An N-terminal signal peptide occupies residues M1 to A35. Disordered stretches follow at residues D38–G58 and G81–G165. Positions S94–V115 are heparin-binding. Composition is skewed to low complexity over residues R108–Q120 and Q129–L145. N-linked (GlcNAc...) asparagine glycosylation occurs at N181. Positions I187–E219 constitute an EGF-like 1 domain. Cystine bridges form between C191/C201, C195/C207, and C209/C218. Residues P229–P339 form a disordered region. Residues S232–S249 form a heparin-binding region. Over residues P262–P274 the composition is skewed to pro residues. 2 stretches are compositionally biased toward polar residues: residues S280–V292 and A304–A314. Residue N343 is glycosylated (N-linked (GlcNAc...) asparagine). L344–V354 contacts heparin. Residues R375–D377 carry the Cell attachment site motif. Positions R396 to H428 constitute an EGF-like 2 domain. 3 disulfide bridges follow: C400-C410, C404-C416, and C418-C427. N421 carries an N-linked (GlcNAc...) asparagine glycan. A Phosphoserine modification is found at S506. A disordered region spans residues R510–A544. Residues G552–G604 form the TB 1 domain. 3 disulfides stabilise this stretch: C554–C576, C563–C589, and C577–C592. A glycan (N-linked (GlcNAc...) asparagine) is linked at N616. Residues D622 to V662 enclose the EGF-like 3; calcium-binding domain. 7 cysteine pairs are disulfide-bonded: C626-C637, C632-C646, C648-C661, C674-C696, C683-C709, C697-C712, and C698-C724. A TB 2 domain is found at G672–C724. A compositionally biased stretch (basic and acidic residues) spans A744–G757. Residues A744–P772 form a disordered region. N-linked (GlcNAc...) asparagine glycosylation is present at N811. In terms of domain architecture, EGF-like 4 spans G844 to T886. Disulfide bonds link C848–C861, C856–C870, C872–C885, C891–C902, C896–C911, C913–C928, C934–C945, C940–C954, C956–C968, C974–C985, C980–C994, C997–C1008, C1014–C1025, C1020–C1034, C1036–C1049, C1055–C1066, C1061–C1075, C1078–C1091, C1097–C1108, C1103–C1117, C1120–C1133, C1139–C1151, C1146–C1160, C1162–C1174, C1180–C1192, C1186–C1201, C1203–C1216, C1222–C1233, C1228–C1242, C1244–C1257, C1263–C1276, C1271–C1285, C1289–C1301, C1307–C1319, C1313–C1328, C1330–C1343, C1349–C1361, C1356–C1370, C1372–C1386, C1413–C1436, C1423–C1448, C1437–C1451, C1438–C1463, C1489–C1502, C1497–C1511, C1513–C1526, C1532–C1542, C1537–C1551, and C1553–C1566. Residues D887–Q929 form the EGF-like 5; calcium-binding domain. In terms of domain architecture, EGF-like 6; calcium-binding spans D930–Q969. An EGF-like 7; calcium-binding domain is found at D970–V1009. The region spanning D1010–Q1050 is the EGF-like 8; calcium-binding domain. Residues D1051–E1092 enclose the EGF-like 9; calcium-binding domain. An EGF-like 10; calcium-binding domain is found at D1093 to E1134. An EGF-like 11; calcium-binding domain is found at D1135 to E1175. A glycan (N-linked (GlcNAc...) asparagine) is linked at N1170. Residues D1176–Q1217 enclose the EGF-like 12; calcium-binding domain. Positions D1218 to V1258 constitute an EGF-like 13; calcium-binding domain. Positions D1259 to I1302 constitute an EGF-like 14; calcium-binding domain. One can recognise an EGF-like 15; calcium-binding domain in the interval D1303–V1344. A glycan (N-linked (GlcNAc...) asparagine) is linked at N1309. The region spanning D1345–R1387 is the EGF-like 16; calcium-binding domain. The TB 3 domain maps to M1411–C1463. A glycan (N-linked (GlcNAc...) asparagine) is linked at N1430. The region spanning D1485–E1527 is the EGF-like 17; calcium-binding domain. The 40-residue stretch at D1528–M1567 folds into the EGF-like 18; calcium-binding domain. The N-linked (GlcNAc...) asparagine glycan is linked to N1568. A TB 4 domain is found at D1584 to C1636. Disulfide bonds link C1586–C1609, C1595–C1621, C1610–C1624, C1611–C1636, C1737–C1748, C1743–C1757, C1759–C1772, C1778–C1793, C1788–C1802, and C1804–C1817. The C-terminal domain stretch occupies residues A1639–E1821. One can recognise an EGF-like 19; calcium-binding domain in the interval Q1733–V1773. In terms of domain architecture, EGF-like 20; calcium-binding spans D1774–T1818.

It belongs to the LTBP family. As to quaternary structure, forms part of the large latent transforming growth factor beta precursor complex; removal is essential for activation of complex. Interacts with SDC4. Interacts (via C-terminal domain) with FBN1 (via N-terminal domain) in a Ca(+2)-dependent manner. Post-translationally, N-Glycosylated. In terms of processing, contains hydroxylated asparagine residues. As to expression, expressed in the aorta (at protein level). Expressed in lung, weakly expressed in heart, placenta, liver and skeletal muscle.

The protein localises to the secreted. It is found in the extracellular space. It localises to the extracellular matrix. In terms of biological role, may play an integral structural role in elastic-fiber architectural organization and/or assembly. This Homo sapiens (Human) protein is Latent-transforming growth factor beta-binding protein 2 (LTBP2).